The following is an 83-amino-acid chain: Small ribosomal subunit protein bS18A (83 aa).

It belongs to the bacterial ribosomal protein bS18 family. As to quaternary structure, part of the 30S ribosomal subunit. Forms a tight heterodimer with protein bS6.

Its function is as follows. Binds as a heterodimer with protein bS6 to the central domain of the 16S rRNA, where it helps stabilize the platform of the 30S subunit. This is Small ribosomal subunit protein bS18A from Mycolicibacterium vanbaalenii (strain DSM 7251 / JCM 13017 / BCRC 16820 / KCTC 9966 / NRRL B-24157 / PYR-1) (Mycobacterium vanbaalenii).